Consider the following 476-residue polypeptide: Protein transport protein Sec61 subunit alpha-like 2 (476 aa).

Over 2 to 33 (AIKFLEVIKPFCAVLPEIQKPERRIQFKEKVL) the chain is Cytoplasmic. The helical transmembrane segment at 34–53 (WTAITLFIFLVCCQIPLFGI) threads the bilayer. At 54–76 (MSSDSADPFYWMRVIMASNRGTL) the chain is on the lumenal side. Residues 77–96 (MELGISPIVTSGLIMQLLAG) form a helical membrane-spanning segment. Topologically, residues 97 to 117 (AKIIEVGDTPKDRALFNGAQK) are cytoplasmic. The chain crosses the membrane as a helical span at residues 118-138 (LFGMIITIGQAVVYVMTGMYG). The Lumenal portion of the chain corresponds to 139–144 (DPSEMG). A helical membrane pass occupies residues 145–165 (AGICLLIIIQLFVAGLIVLLL). Topologically, residues 166-172 (DELLQKG) are cytoplasmic. A helical transmembrane segment spans residues 173 to 193 (YGLGSGISLFIATNICETIVW). At 194–240 (KAFSPTTVNTGRGTEFEGAIIALFHLLATRTDKVRALREAFYRQNLP) the chain is on the lumenal side. A helical membrane pass occupies residues 241–261 (NLMNLIATIFVFAVVIYFQGF). Residues 262–288 (RVDLPIKSARYRGQYNTYPIKLFYTSN) are Cytoplasmic-facing. A helical transmembrane segment spans residues 289 to 309 (IPIILQSALVSNLYVISQMLS). The Lumenal portion of the chain corresponds to 310-354 (TRFSGNFLVNLLGTWSDTSTGGPARAYPVGGLCYYLSPPESFGTV). Residues 355 to 375 (LEDPIHAIIYIIFMLGSCAFF) form a helical membrane-spanning segment. Residues 376 to 420 (SKTWIEVSGSSAKDVAKQLKEQQMVMRGHRETSMVHELNRYIPTA) lie on the Cytoplasmic side of the membrane. Residues 421-441 (AAFGGLCIGGLSVMADFLGAI) traverse the membrane as a helical segment. The Lumenal segment spans residues 442-445 (GSGT). Residues 446 to 462 (GILLAVTIIYQYFEIFV) form a helical membrane-spanning segment. Over 463 to 476 (KEQSEVGSVGALLF) the chain is Cytoplasmic.

The protein belongs to the SecY/SEC61-alpha family. As to quaternary structure, the SEC61 channel-forming translocon complex consists of channel-forming core components SEC61A1, SEC61B and SEC61G and different auxiliary components such as SEC62 and SEC63.

It is found in the endoplasmic reticulum membrane. Functionally, component of SEC61 channel-forming translocon complex that mediates transport of signal peptide-containing precursor polypeptides across the endoplasmic reticulum (ER). Forms a ribosome receptor and a gated pore in the ER membrane, both functions required for cotranslational translocation of nascent polypeptides. The protein is Protein transport protein Sec61 subunit alpha-like 2 (sec61al2) of Danio rerio (Zebrafish).